We begin with the raw amino-acid sequence, 387 residues long: Large ribosomal subunit protein uL3 (387 aa).

The protein belongs to the universal ribosomal protein uL3 family.

Its subcellular location is the cytoplasm. The polypeptide is Large ribosomal subunit protein uL3 (RPL3) (Eremothecium gossypii (strain ATCC 10895 / CBS 109.51 / FGSC 9923 / NRRL Y-1056) (Yeast)).